The chain runs to 1391 residues: MNLLNLFNPLQTAGMEEEFDAIKIGIASPETIRSWSYGEVKKPETINYRTFKPERDGLFCAKIFGPVKDYECLCGKYKRLKFKGVTCEKCGVEVTLSKVRRERMGHIELAAPVAHIWFLKSLPSRLGMVLDMTLRDIERVLYFEAFVVTDPGMTPLQRRQLLTEDDYYNKLDEYGDDFDAKMGAEGIRELLRTLNVAGEIEILRQELESTGSDTKIKKIAKRLKVLEAFHRSGMKLEWMIMDVLPVLPPDLRPLVPLDGGRFATSDLNDLYRRVINRNNRLKRLLELHAPDIIVRNEKRMLQEAVDSLLDNGRRGKAMTGANKRPLKSLADMIKGKGGRFRQNLLGKRVDYSGRSVITVGPYLRLHQCGLPKKMALELFKPFIFHKLEKQGLASTVKAAKKLVEQEVPEVWDILEEVIREHPIMLNRAPTLHRLGIQAFEPILIEGKAIQLHPLVCAAFNADFDGDQMAVHVPLSLEAQMEARTLMLASNNVLSPANGEPIIVPSQDIVLGLYYMTRDRINAKGEGSLFADVKEVHRAYHTKQVELGTKITVRLREWVKNEAGEFEPVVNRYETTVGRALLSEILPKGLPFEYVNKALKKKEISKLINASFRLCGLRDTVIFADHLMYTGFGFAAKGGISIAVDDMEIPKEKVALLAEANAEVKEIEDQYRQGLVTNGERYNKVVDIWGRAGDKIAKAMMDNLSKQKVIDRDGNEVDQESFNSIYMMADSGARGSAAQIKQLSGMRGLMAKPDGSIIETPITSNFREGLTVLQYFIATHGARKGLADTALKTANSGYLTRRLVDVTQDLVVVEDDCGTSDGFVMKAVVQGGDVIEALRERILGRVTASDVVDPSSGETLVEAGTLLTEKLVDMIDQSGVDEVKVRTPITCKTRHGLCAHCYGRDLARGKLVNAGEAVGVIAAQSIGEPGTQLTMRTFHIGGAASRAAAASQVEAKSNGTARFSSQMRYVANNKGELVVIGRSCEVVIHDDIGRERERHKVPYGAILLVQDGMAIKAGQTLATWDPHTRPMITEHAGMVKFENVEEGVTVAKQTDDVTGLSTLVVIDGKRRSSSASKLLRPTVKLLDENGVEICIPGTSTPVSMAFPVGAVITVREGQEIGKGDVLARIPQASSKTRDITGGLPRVAELFEARVPKDAGMLAEITGTVSFGKETKGKQRLIITDVDGVAYETLISKEKQILVHDGQVVNRGETIVDGAVDPHDILRLQGIEALARYIVQEVQEVYRLQGVKISDKHIEVIIRQMLRRVNIADAGETGFITGEQVERGDVMAANEKALEEGKEPARYENVLLGITKASLSTDSFISAASFQETTRVLTEAAIMGKQDELRGLKENVIVGRLIPAGTGLTYHRSRHQQWQEVEQETAETQVTDE.

4 residues coordinate Zn(2+): C72, C74, C87, and C90. Residues D462, D464, and D466 each contribute to the Mg(2+) site. Zn(2+) contacts are provided by C816, C890, C897, and C900.

This sequence belongs to the RNA polymerase beta' chain family. As to quaternary structure, the RNAP catalytic core consists of 2 alpha, 1 beta, 1 beta' and 1 omega subunit. When a sigma factor is associated with the core the holoenzyme is formed, which can initiate transcription. Requires Mg(2+) as cofactor. It depends on Zn(2+) as a cofactor.

It carries out the reaction RNA(n) + a ribonucleoside 5'-triphosphate = RNA(n+1) + diphosphate. Functionally, DNA-dependent RNA polymerase catalyzes the transcription of DNA into RNA using the four ribonucleoside triphosphates as substrates. This is DNA-directed RNA polymerase subunit beta' from Neisseria meningitidis serogroup C / serotype 2a (strain ATCC 700532 / DSM 15464 / FAM18).